Consider the following 496-residue polypeptide: Glycerol kinase (496 aa).

Thr12 is an ADP binding site. The ATP site is built by Thr12, Thr13, and Ser14. Sn-glycerol 3-phosphate is bound at residue Thr12. Position 16 (Arg16) interacts with ADP. Positions 82, 83, and 134 each coordinate sn-glycerol 3-phosphate. Glycerol contacts are provided by Arg82, Glu83, and Tyr134. The residue at position 230 (His230) is a Phosphohistidine; by HPr. Residue Asp244 participates in sn-glycerol 3-phosphate binding. 2 residues coordinate glycerol: Asp244 and Gln245. ADP is bound by residues Thr266 and Gly309. Residues Thr266, Gly309, Gln313, and Gly410 each contribute to the ATP site. ADP contacts are provided by Gly410 and Asn414.

This sequence belongs to the FGGY kinase family. As to quaternary structure, homotetramer and homodimer (in equilibrium). Post-translationally, the phosphoenolpyruvate-dependent sugar phosphotransferase system (PTS), including enzyme I, and histidine-containing protein (HPr) are required for the phosphorylation, which leads to the activation of the enzyme.

The catalysed reaction is glycerol + ATP = sn-glycerol 3-phosphate + ADP + H(+). Its pathway is polyol metabolism; glycerol degradation via glycerol kinase pathway; sn-glycerol 3-phosphate from glycerol: step 1/1. Activated by phosphorylation and inhibited by fructose 1,6-bisphosphate (FBP). Its function is as follows. Key enzyme in the regulation of glycerol uptake and metabolism. Catalyzes the phosphorylation of glycerol to yield sn-glycerol 3-phosphate. In Bacillus cytotoxicus (strain DSM 22905 / CIP 110041 / 391-98 / NVH 391-98), this protein is Glycerol kinase.